We begin with the raw amino-acid sequence, 1023 residues long: Probable histidine kinase 3 (1023 aa).

Residues 1 to 80 lie on the Cytoplasmic side of the membrane; the sequence is MDEMSCGGGG…RGWRVVRETW (80 aa). Residues 81–101 form a helical membrane-spanning segment; the sequence is WWVLLLWILAGSLGSFYLFLF. The Extracellular segment spans residues 102 to 387; the sequence is MNAQSLDKRR…CRFEKKPPWP (286 aa). The region spanning 151–352 is the CHASE domain; sequence TPSAIDQMTF…TNESPISMYG (202 aa). A helical membrane pass occupies residues 388–408; that stretch reads WLAITSSFGTLVIALLTGHIF. The Cytoplasmic portion of the chain corresponds to 409-1023; the sequence is QATVHRIAKV…RFFQNHDQVE (615 aa). The 271-residue stretch at 445 to 715 folds into the Histidine kinase domain; that stretch reads TVSHEIRTPM…TFTFTAVLMR (271 aa). At histidine 448 the chain carries Phosphohistidine; by autocatalysis. Response regulatory domains lie at 732-854 and 880-1016; these read NALV…RRAL and QIIV…ARFF. At aspartate 783 the chain carries 4-aspartylphosphate. The segment at 812–831 is disordered; the sequence is LFLLGSSASSPKGGSDTSRE. The segment covering 817–827 has biased composition (polar residues); that stretch reads SSASSPKGGSD. A 4-aspartylphosphate modification is found at aspartate 930.

Post-translationally, activation probably requires a transfer of a phosphate group between a His in the transmitter domain and an Asp of the receiver domain.

Its subcellular location is the cell membrane. The enzyme catalyses ATP + protein L-histidine = ADP + protein N-phospho-L-histidine.. Cytokinin receptor related to bacterial two-component regulators. Functions as a histidine kinase and transmits the stress signal to a downstream MAPK cascade. The sequence is that of Probable histidine kinase 3 from Oryza sativa subsp. indica (Rice).